The sequence spans 859 residues: Bifunctional levopimaradiene synthase, chloroplastic (859 aa).

The N-terminal 52 residues, Met1 to Arg52, are a transit peptide targeting the chloroplast. Mg(2+) contacts are provided by Asp392, Asp394, Asp611, Asp615, Asn755, and Glu763. The DXDD motif signature appears at Asp392–Asp395. The DDXXD motif signature appears at Asp611–Asp615.

It belongs to the terpene synthase family. Tpsd subfamily. Requires Mg(2+) as cofactor. It depends on Mn(2+) as a cofactor.

It is found in the plastid. The protein resides in the chloroplast. It carries out the reaction (+)-copalyl diphosphate = abieta-8(14),12-diene + diphosphate. It catalyses the reaction (+)-copalyl diphosphate = abieta-7,13-diene + diphosphate. Its pathway is secondary metabolite biosynthesis; terpenoid biosynthesis. The protein operates within terpene metabolism; oleoresin biosynthesis. Its function is as follows. Terpene synthase (di-TPS) involved in the biosynthesis of diterpene natural products included in conifer oleoresin secretions and volatile emissions; these compounds contribute to biotic and abiotic stress defense against herbivores and pathogens. Catalyzes the conversion of (+)-copalyl diphosphate ((+)-CPP) to isopimaradiene. This Picea sitchensis (Sitka spruce) protein is Bifunctional levopimaradiene synthase, chloroplastic.